The chain runs to 585 residues: Arginine--tRNA ligase (585 aa).

The 'HIGH' region signature appears at 131-141 (ANPTGPMHVGH).

It belongs to the class-I aminoacyl-tRNA synthetase family. In terms of assembly, monomer.

The protein localises to the cytoplasm. It catalyses the reaction tRNA(Arg) + L-arginine + ATP = L-arginyl-tRNA(Arg) + AMP + diphosphate. The chain is Arginine--tRNA ligase from Rhizobium etli (strain CIAT 652).